The primary structure comprises 135 residues: ATP synthase epsilon chain (135 aa).

This sequence belongs to the ATPase epsilon chain family. In terms of assembly, F-type ATPases have 2 components, CF(1) - the catalytic core - and CF(0) - the membrane proton channel. CF(1) has five subunits: alpha(3), beta(3), gamma(1), delta(1), epsilon(1). CF(0) has three main subunits: a, b and c.

The protein localises to the cell inner membrane. Produces ATP from ADP in the presence of a proton gradient across the membrane. The sequence is that of ATP synthase epsilon chain from Rhizobium leguminosarum bv. trifolii (strain WSM2304).